The following is a 326-amino-acid chain: Tetraacyldisaccharide 4'-kinase (326 aa).

55-62 contributes to the ATP binding site; the sequence is TAGGNGKT.

It belongs to the LpxK family.

The enzyme catalyses a lipid A disaccharide + ATP = a lipid IVA + ADP + H(+). Its pathway is glycolipid biosynthesis; lipid IV(A) biosynthesis; lipid IV(A) from (3R)-3-hydroxytetradecanoyl-[acyl-carrier-protein] and UDP-N-acetyl-alpha-D-glucosamine: step 6/6. Transfers the gamma-phosphate of ATP to the 4'-position of a tetraacyldisaccharide 1-phosphate intermediate (termed DS-1-P) to form tetraacyldisaccharide 1,4'-bis-phosphate (lipid IVA). This chain is Tetraacyldisaccharide 4'-kinase, found in Klebsiella pneumoniae subsp. pneumoniae (strain ATCC 700721 / MGH 78578).